The chain runs to 280 residues: Mitochondrial outer membrane protein porin 2 (280 aa).

This sequence belongs to the eukaryotic mitochondrial porin (TC 1.B.8.1) family. As to expression, expressed in roots, stems, leaves, palea, lemma and pollen.

It is found in the mitochondrion outer membrane. Forms a channel through the mitochondrial outer membrane that allows diffusion of small hydrophilic molecules. The channel adopts an open conformation at low or zero membrane potential and a closed conformation at potentials above 30-40 mV. The open state has a weak anion selectivity whereas the closed state is cation-selective. This is Mitochondrial outer membrane protein porin 2 (VDAC2) from Oryza sativa subsp. japonica (Rice).